The sequence spans 169 residues: MVSSKGLWKERPSAHTSECFSTTACPVAFILLVWNSQTPAGLQSLCTGRHPSLSARAQRAGPRASREEGTFWTERVGQERWLIRSGSSQNESQEDQGAGLISQAGLKADNRRESSTWANEVEDRRPQCTPALNLTPSHPHPPHSLTTFLRSVIGIQIPPGLVAAGGTVA.

The segment at 82–140 (LIRSGSSQNESQEDQGAGLISQAGLKADNRRESSTWANEVEDRRPQCTPALNLTPSHPH) is disordered.

Belongs to the FAM231 family.

This is FAM231A/C-like protein LOC102723383 from Homo sapiens (Human).